Reading from the N-terminus, the 89-residue chain is uncharacterized protein (89 aa).

This is an uncharacterized protein from Borreliella burgdorferi (strain ATCC 35210 / DSM 4680 / CIP 102532 / B31) (Borrelia burgdorferi).